The primary structure comprises 306 residues: LysM and putative peptidoglycan-binding domain-containing protein 3 (306 aa).

The Extracellular segment spans residues 1 to 217; that stretch reads MAGRHQNRSF…PYYGADWGIG (217 aa). The N-linked (GlcNAc...) asparagine glycan is linked to Asn-7. The residue at position 55 (Ser-55) is a Phosphoserine. A LysM domain is found at 65 to 109; that stretch reads LTKDIQEGDTLNAIALQYCCTVADIKRVNNLISDQDFFALRSIKI. A helical transmembrane segment spans residues 218–238; it reads WWTAVVIMLIVGIITPVFYLL. Over 239–306 the chain is Cytoplasmic; it reads YYEILAKVDV…SQSPAAQQET (68 aa).

Its subcellular location is the cell membrane. The protein localises to the golgi apparatus. Its function is as follows. Essential for Golgi structural integrity. This chain is LysM and putative peptidoglycan-binding domain-containing protein 3 (LYSMD3), found in Homo sapiens (Human).